The sequence spans 473 residues: Photosystem II CP43 reaction center protein (473 aa).

A propeptide spanning residues 1–14 is cleaved from the precursor; sequence MKILYSLRRFYHVE. Threonine 15 is modified (N-acetylthreonine). Position 15 is a phosphothreonine (threonine 15). A run of 5 helical transmembrane segments spans residues 69-93, 134-155, 178-200, 255-275, and 291-312; these read LFEVAHFVPEKPMYEQGLILLPHLA, LLGPETLEESFPFFGYVWKDRN, KALYFGGVYDTWAPGGGDVRKIT, KPFAWARRAFVWSGEAYLSYS, and WFNNTAYPSEFYGPTGPEASQA. A [CaMn4O5] cluster-binding site is contributed by glutamate 367. A helical transmembrane segment spans residues 447–471; sequence RARAAAAGFEKGIDRDLEPVLYMNP.

Belongs to the PsbB/PsbC family. PsbC subfamily. In terms of assembly, PSII is composed of 1 copy each of membrane proteins PsbA, PsbB, PsbC, PsbD, PsbE, PsbF, PsbH, PsbI, PsbJ, PsbK, PsbL, PsbM, PsbT, PsbX, PsbY, PsbZ, Psb30/Ycf12, at least 3 peripheral proteins of the oxygen-evolving complex and a large number of cofactors. It forms dimeric complexes. The cofactor is Binds multiple chlorophylls and provides some of the ligands for the Ca-4Mn-5O cluster of the oxygen-evolving complex. It may also provide a ligand for a Cl- that is required for oxygen evolution. PSII binds additional chlorophylls, carotenoids and specific lipids..

The protein resides in the plastid. The protein localises to the chloroplast thylakoid membrane. One of the components of the core complex of photosystem II (PSII). It binds chlorophyll and helps catalyze the primary light-induced photochemical processes of PSII. PSII is a light-driven water:plastoquinone oxidoreductase, using light energy to abstract electrons from H(2)O, generating O(2) and a proton gradient subsequently used for ATP formation. The protein is Photosystem II CP43 reaction center protein of Brachypodium distachyon (Purple false brome).